A 455-amino-acid chain; its full sequence is Tubulin alpha chain (455 aa).

GTP contacts are provided by Gln11, Glu77, Ser145, Gly149, Thr150, Ser184, Asn211, and Asn233. Glu77 lines the Mg(2+) pocket. Residue Glu259 is part of the active site.

It belongs to the tubulin family. In terms of assembly, dimer of alpha and beta chains. A typical microtubule is a hollow water-filled tube with an outer diameter of 25 nm and an inner diameter of 15 nM. Alpha-beta heterodimers associate head-to-tail to form protofilaments running lengthwise along the microtubule wall with the beta-tubulin subunit facing the microtubule plus end conferring a structural polarity. Microtubules usually have 13 protofilaments but different protofilament numbers can be found in some organisms and specialized cells. Mg(2+) serves as cofactor.

It localises to the cytoplasm. It is found in the cytoskeleton. The enzyme catalyses GTP + H2O = GDP + phosphate + H(+). In terms of biological role, tubulin is the major constituent of microtubules, a cylinder consisting of laterally associated linear protofilaments composed of alpha- and beta-tubulin heterodimers. Microtubules grow by the addition of GTP-tubulin dimers to the microtubule end, where a stabilizing cap forms. Below the cap, tubulin dimers are in GDP-bound state, owing to GTPase activity of alpha-tubulin. The protein is Tubulin alpha chain of Entamoeba histolytica (strain ATCC 30459 / HM-1:IMSS / ABRM).